A 550-amino-acid chain; its full sequence is Arginine--tRNA ligase (550 aa).

The 'HIGH' region signature appears at 130–140; sequence ANPTGPIHIGG.

The protein belongs to the class-I aminoacyl-tRNA synthetase family. Monomer.

The protein localises to the cytoplasm. The enzyme catalyses tRNA(Arg) + L-arginine + ATP = L-arginyl-tRNA(Arg) + AMP + diphosphate. The sequence is that of Arginine--tRNA ligase from Mycobacterium sp. (strain JLS).